Here is a 197-residue protein sequence, read N- to C-terminus: Probable thymidylate kinase (197 aa).

ATP is bound at residue glycine 7–threonine 14.

Belongs to the thymidylate kinase family.

The catalysed reaction is dTMP + ATP = dTDP + ADP. The protein is Probable thymidylate kinase of Halorubrum lacusprofundi (strain ATCC 49239 / DSM 5036 / JCM 8891 / ACAM 34).